A 278-amino-acid chain; its full sequence is Rhomboid protease GlpG (278 aa).

Transmembrane regions (helical) follow at residues 95-115, 143-163, 170-190, 192-212, 224-241, and 245-267; these read GPLT…MQIL, AFLH…WYLG, LGSG…GWAQ, LFSG…MGYC, LMLP…LVAG, and ILGM…LMAF. Residue Ser202 is the Nucleophile of the active site. His255 is a catalytic residue.

It belongs to the peptidase S54 family.

The protein resides in the cell inner membrane. It carries out the reaction Cleaves type-1 transmembrane domains using a catalytic dyad composed of serine and histidine that are contributed by different transmembrane domains.. Its function is as follows. Rhomboid-type serine protease that catalyzes intramembrane proteolysis. The sequence is that of Rhomboid protease GlpG from Serratia proteamaculans (strain 568).